The following is a 360-amino-acid chain: Peptide chain release factor 1 (360 aa).

Residue glutamine 236 is modified to N5-methylglutamine. The disordered stretch occupies residues 288-308; it reads QDEQDAERKSTIGTGDRSERI. Residues 293 to 308 are compositionally biased toward basic and acidic residues; it reads AERKSTIGTGDRSERI.

Belongs to the prokaryotic/mitochondrial release factor family. Methylated by PrmC. Methylation increases the termination efficiency of RF1.

Its subcellular location is the cytoplasm. In terms of biological role, peptide chain release factor 1 directs the termination of translation in response to the peptide chain termination codons UAG and UAA. This is Peptide chain release factor 1 from Streptococcus equi subsp. zooepidemicus (strain H70).